The sequence spans 168 residues: Large ribosomal subunit protein uL10 (168 aa).

This sequence belongs to the universal ribosomal protein uL10 family. Part of the ribosomal stalk of the 50S ribosomal subunit. The N-terminus interacts with L11 and the large rRNA to form the base of the stalk. The C-terminus forms an elongated spine to which L12 dimers bind in a sequential fashion forming a multimeric L10(L12)X complex.

Its function is as follows. Forms part of the ribosomal stalk, playing a central role in the interaction of the ribosome with GTP-bound translation factors. The protein is Large ribosomal subunit protein uL10 of Acidovorax ebreus (strain TPSY) (Diaphorobacter sp. (strain TPSY)).